Here is an 84-residue protein sequence, read N- to C-terminus: MESVITATIIGASILLAFAALGTAIGFAILGGKFLESSARQPELASSLQTKMFIVAGLLDAIAMIAVGISLLFIFANPFIDLLK.

2 helical membrane passes run isoleucine 9–isoleucine 29 and isoleucine 54–isoleucine 74.

Belongs to the ATPase C chain family. As to quaternary structure, F-type ATPases have 2 components, F(1) - the catalytic core - and F(0) - the membrane proton channel. F(1) has five subunits: alpha(3), beta(3), gamma(1), delta(1), epsilon(1). F(0) has three main subunits: a(1), b(2) and c(10-14). The alpha and beta chains form an alternating ring which encloses part of the gamma chain. F(1) is attached to F(0) by a central stalk formed by the gamma and epsilon chains, while a peripheral stalk is formed by the delta and b chains.

The protein resides in the cell inner membrane. Functionally, f(1)F(0) ATP synthase produces ATP from ADP in the presence of a proton or sodium gradient. F-type ATPases consist of two structural domains, F(1) containing the extramembraneous catalytic core and F(0) containing the membrane proton channel, linked together by a central stalk and a peripheral stalk. During catalysis, ATP synthesis in the catalytic domain of F(1) is coupled via a rotary mechanism of the central stalk subunits to proton translocation. Its function is as follows. Key component of the F(0) channel; it plays a direct role in translocation across the membrane. A homomeric c-ring of between 10-14 subunits forms the central stalk rotor element with the F(1) delta and epsilon subunits. This Actinobacillus pleuropneumoniae serotype 7 (strain AP76) protein is ATP synthase subunit c.